Consider the following 67-residue polypeptide: Small ribosomal subunit protein eS17 (67 aa).

Belongs to the eukaryotic ribosomal protein eS17 family.

The sequence is that of Small ribosomal subunit protein eS17 from Korarchaeum cryptofilum (strain OPF8).